The sequence spans 442 residues: tRNA-2-methylthio-N(6)-dimethylallyladenosine synthase (442 aa).

Residues 3–120 (NKLYIRTFGC…LPNMLNDALN (118 aa)) enclose the MTTase N-terminal domain. Cys12, Cys49, Cys83, Cys157, Cys161, and Cys164 together coordinate [4Fe-4S] cluster. A Radical SAM core domain is found at 143–375 (RTNSVTAFVS…QKTINNNTEH (233 aa)). One can recognise a TRAM domain in the interval 378–440 (QLMIGSIQKV…GNSLMGDLLT (63 aa)).

It belongs to the methylthiotransferase family. MiaB subfamily. As to quaternary structure, monomer. [4Fe-4S] cluster serves as cofactor.

The protein resides in the cytoplasm. It carries out the reaction N(6)-dimethylallyladenosine(37) in tRNA + (sulfur carrier)-SH + AH2 + 2 S-adenosyl-L-methionine = 2-methylsulfanyl-N(6)-dimethylallyladenosine(37) in tRNA + (sulfur carrier)-H + 5'-deoxyadenosine + L-methionine + A + S-adenosyl-L-homocysteine + 2 H(+). Functionally, catalyzes the methylthiolation of N6-(dimethylallyl)adenosine (i(6)A), leading to the formation of 2-methylthio-N6-(dimethylallyl)adenosine (ms(2)i(6)A) at position 37 in tRNAs that read codons beginning with uridine. The polypeptide is tRNA-2-methylthio-N(6)-dimethylallyladenosine synthase (Vesicomyosocius okutanii subsp. Calyptogena okutanii (strain HA)).